Here is a 971-residue protein sequence, read N- to C-terminus: Translation initiation factor IF-2 (971 aa).

Residues 48–63 are compositionally biased toward basic and acidic residues; sequence DHLRKSHGATDGDKRK. 2 disordered regions span residues 48–86 and 101–381; these read DHLRKSHGATDGDKRKITLTRKHTSEIKQSDATGKARTI and DVAE…STFQ. Residues 105 to 114 show a composition bias toward low complexity; that stretch reads GADQGQAQVA. Residues 121 to 181 show a composition bias toward basic and acidic residues; that stretch reads ELKRREEEAR…EEEAATKRAA (61 aa). Positions 182 to 203 are enriched in low complexity; that stretch reads AEAAAAQQQAAAQQAAAEQEAT. The span at 210-261 shows a compositional bias: basic and acidic residues; it reads DEARAAAERAAQREAAKKAEDAAREAADKARAEQEEISKRRAAAEAEARAIR. Pro residues predominate over residues 277-286; the sequence is PPKPVEPPKP. Residues 304 to 326 are compositionally biased toward low complexity; it reads ARPAVKKPAGAAAPATTQAPAGA. Gly residues predominate over residues 356-369; it reads SSGGVDRGWRGGPK. Positions 471-640 constitute a tr-type G domain; sequence PRPPVVTVMG…LLQAEVLELK (170 aa). Residues 480–487 are G1; that stretch reads GHVDHGKT. 480–487 is a binding site for GTP; that stretch reads GHVDHGKT. A G2 region spans residues 505 to 509; that stretch reads GITQH. The G3 stretch occupies residues 526-529; it reads DTPG. Residues 526 to 530 and 580 to 583 contribute to the GTP site; these read DTPGH and NKID. The interval 580 to 583 is G4; it reads NKID. Positions 616-618 are G5; the sequence is SAK.

It belongs to the TRAFAC class translation factor GTPase superfamily. Classic translation factor GTPase family. IF-2 subfamily.

It localises to the cytoplasm. Its function is as follows. One of the essential components for the initiation of protein synthesis. Protects formylmethionyl-tRNA from spontaneous hydrolysis and promotes its binding to the 30S ribosomal subunits. Also involved in the hydrolysis of GTP during the formation of the 70S ribosomal complex. The polypeptide is Translation initiation factor IF-2 (Burkholderia orbicola (strain MC0-3)).